A 303-amino-acid polypeptide reads, in one-letter code: Acetaldehyde dehydrogenase 1 (303 aa).

The active-site Acyl-thioester intermediate is Cys130. Residues 161–169 (SVGPGTRKN) and Asn272 each bind NAD(+).

It belongs to the acetaldehyde dehydrogenase family.

It catalyses the reaction acetaldehyde + NAD(+) + CoA = acetyl-CoA + NADH + H(+). In Cupriavidus metallidurans (strain ATCC 43123 / DSM 2839 / NBRC 102507 / CH34) (Ralstonia metallidurans), this protein is Acetaldehyde dehydrogenase 1.